We begin with the raw amino-acid sequence, 555 residues long: MFS-type transporter VdtG (555 aa).

Residues 1-20 (MNGNGTADKPGPPGGKPFGP) form a disordered region. N-linked (GlcNAc...) asparagine glycosylation is present at Asn-4. 3 consecutive transmembrane segments (helical) span residues 30-50 (TGFKLYSIMTGLYLASFLTAL), 71-91 (DIGWYGSAYLLTFCAFQLLFG), and 101-121 (WVFLSAVLIFEIGSAICGAAP). Asn-122 is a glycosylation site (N-linked (GlcNAc...) asparagine). 2 helical membrane passes run 132–152 (IAGLGSSGIFGGSVIITFFTV) and 162–182 (GIAGVIFALASSVGPLIGGGF). Asn-185 is a glycosylation site (N-linked (GlcNAc...) asparagine). A run of 4 helical transmembrane segments spans residues 190–210 (WCFYINLPVGALTVVTILLFL), 232–252 (LGNLCLIPGIICLLLAIQWGG), 262–282 (IVALLVLAGVLLIAFVGVQLW), and 304–324 (AFTICVTAGFMSFNYYLPIWF). Asn-329 is a glycosylation site (N-linked (GlcNAc...) asparagine). 5 consecutive transmembrane segments (helical) span residues 337-357 (VMMLPTVISSGVASLACGFII), 364-384 (TPFMIGGSVLMAIGAGLLTTF), 393-413 (WIGYQVLWALGCGMSMQQASL), 425-445 (PIGISLIFFSQSLGGSVFLAV), and 497-517 (LMDVFRVAVASSCACVVAAAF). The interval 528-555 (AAGPGGPGGPGGPGGPGGPEGLRGGNKV) is disordered. Residues 530-555 (GPGGPGGPGGPGGPGGPEGLRGGNKV) show a composition bias toward gly residues.

This sequence belongs to the major facilitator superfamily. TCR/Tet family.

It is found in the endoplasmic reticulum membrane. In terms of biological role, MFS-type transporter; part of the gene cluster that mediates the biosynthesis of viriditoxin, one of the 'classical' secondary metabolites produced by fungi and that has antibacterial activity. Is not essential for viriditoxin production. This is MFS-type transporter VdtG from Byssochlamys spectabilis (Paecilomyces variotii).